Reading from the N-terminus, the 81-residue chain is Probable small nuclear ribonucleoprotein G (81 aa).

In terms of domain architecture, Sm spans 5–76 (GQPPALKKYM…VVTVEALEPV (72 aa)).

This sequence belongs to the snRNP Sm proteins family.

Its subcellular location is the nucleus. Functionally, probable common Sm protein, is found in U1 and U2 snRNPs and may be part of the spliceosome. In Medicago sativa (Alfalfa), this protein is Probable small nuclear ribonucleoprotein G (C29).